The primary structure comprises 443 residues: ATP-dependent protease ATPase subunit HslU (443 aa).

Residues isoleucine 19 and 61–66 (GVGKTE) each bind ATP. The tract at residues 139–158 (PPRDIGFSQPEEKDSNTRQV) is disordered. ATP-binding residues include aspartate 256, glutamate 321, and arginine 393.

Belongs to the ClpX chaperone family. HslU subfamily. As to quaternary structure, a double ring-shaped homohexamer of HslV is capped on each side by a ring-shaped HslU homohexamer. The assembly of the HslU/HslV complex is dependent on binding of ATP.

It localises to the cytoplasm. Functionally, ATPase subunit of a proteasome-like degradation complex; this subunit has chaperone activity. The binding of ATP and its subsequent hydrolysis by HslU are essential for unfolding of protein substrates subsequently hydrolyzed by HslV. HslU recognizes the N-terminal part of its protein substrates and unfolds these before they are guided to HslV for hydrolysis. This chain is ATP-dependent protease ATPase subunit HslU, found in Cupriavidus taiwanensis (strain DSM 17343 / BCRC 17206 / CCUG 44338 / CIP 107171 / LMG 19424 / R1) (Ralstonia taiwanensis (strain LMG 19424)).